Reading from the N-terminus, the 421-residue chain is UDP-N-acetylglucosamine 1-carboxyvinyltransferase (421 aa).

22 to 23 is a binding site for phosphoenolpyruvate; that stretch reads KN. Arginine 93 is a binding site for UDP-N-acetyl-alpha-D-glucosamine. Cysteine 117 (proton donor) is an active-site residue. Cysteine 117 is subject to 2-(S-cysteinyl)pyruvic acid O-phosphothioketal. UDP-N-acetyl-alpha-D-glucosamine is bound by residues 122-126, aspartate 308, and isoleucine 330; that span reads RPVDL.

This sequence belongs to the EPSP synthase family. MurA subfamily.

Its subcellular location is the cytoplasm. It carries out the reaction phosphoenolpyruvate + UDP-N-acetyl-alpha-D-glucosamine = UDP-N-acetyl-3-O-(1-carboxyvinyl)-alpha-D-glucosamine + phosphate. The protein operates within cell wall biogenesis; peptidoglycan biosynthesis. In terms of biological role, cell wall formation. Adds enolpyruvyl to UDP-N-acetylglucosamine. This is UDP-N-acetylglucosamine 1-carboxyvinyltransferase from Pseudomonas savastanoi pv. phaseolicola (strain 1448A / Race 6) (Pseudomonas syringae pv. phaseolicola (strain 1448A / Race 6)).